The sequence spans 106 residues: Urease subunit beta (106 aa).

It belongs to the urease beta subunit family. Heterotrimer of UreA (gamma), UreB (beta) and UreC (alpha) subunits. Three heterotrimers associate to form the active enzyme.

The protein localises to the cytoplasm. It carries out the reaction urea + 2 H2O + H(+) = hydrogencarbonate + 2 NH4(+). It participates in nitrogen metabolism; urea degradation; CO(2) and NH(3) from urea (urease route): step 1/1. In Alkalilimnicola ehrlichii (strain ATCC BAA-1101 / DSM 17681 / MLHE-1), this protein is Urease subunit beta.